Here is a 259-residue protein sequence, read N- to C-terminus: Small ribosomal subunit protein uS2 (259 aa).

The protein belongs to the universal ribosomal protein uS2 family.

The chain is Small ribosomal subunit protein uS2 from Streptococcus pneumoniae (strain 70585).